Here is a 215-residue protein sequence, read N- to C-terminus: Pyrrolidone-carboxylate peptidase (215 aa).

Active-site residues include Glu78, Cys141, and His165.

It belongs to the peptidase C15 family. In terms of assembly, homotetramer.

It localises to the cytoplasm. The catalysed reaction is Release of an N-terminal pyroglutamyl group from a polypeptide, the second amino acid generally not being Pro.. In terms of biological role, removes 5-oxoproline from various penultimate amino acid residues except L-proline. This Streptococcus pyogenes serotype M1 protein is Pyrrolidone-carboxylate peptidase (pcp).